A 163-amino-acid polypeptide reads, in one-letter code: Large ribosomal subunit protein uL10 (163 aa).

This sequence belongs to the universal ribosomal protein uL10 family. As to quaternary structure, part of the ribosomal stalk of the 50S ribosomal subunit. The N-terminus interacts with L11 and the large rRNA to form the base of the stalk. The C-terminus forms an elongated spine to which L12 dimers bind in a sequential fashion forming a multimeric L10(L12)X complex.

In terms of biological role, forms part of the ribosomal stalk, playing a central role in the interaction of the ribosome with GTP-bound translation factors. This is Large ribosomal subunit protein uL10 (rplJ) from Pasteurella multocida (strain Pm70).